The following is a 267-amino-acid chain: MSDNLSARWHRILDMTNRETSDDVVIARSSFDDFSQSTPWRKFEISCGNRSFFVNPGWLAELSPYFADELYVRKPNVQRYVIDQATPDEVLEFLRCITFCPMRKPLTVKNVSLVLTFANRFEMRPVQARCENFIAQNATSLSRDKTKLFQFFPLQVTCAMSQCDPNSSTMSVLVDKLAGIKDDELSRLHFAEMPGDVVAEVYAQKIQRTKDKKAQRQAGASDETAAGCCFMQWASSLFNRRRQRNQADQSILPPSGDQQHHRSELHA.

Residues R244 to A267 form a disordered region. Over residues Q258–A267 the composition is skewed to basic and acidic residues.

The polypeptide is Cytokinesis defective protein 7 (Caenorhabditis elegans).